The primary structure comprises 534 residues: uncharacterized protein (534 aa).

Positions methionine 1–alanine 22 are cleaved as a signal peptide. Asparagine 31 is a glycosylation site (N-linked (GlcNAc...) asparagine). 2 disordered regions span residues proline 70–serine 145 and serine 176–proline 418. An N-linked (GlcNAc...) asparagine glycan is attached at asparagine 426.

The protein localises to the endoplasmic reticulum. The protein resides in the cell membrane. This is an uncharacterized protein from Schizosaccharomyces pombe (strain 972 / ATCC 24843) (Fission yeast).